Here is a 467-residue protein sequence, read N- to C-terminus: MRTKIKSLRGTTPEVRALIGHDITLKGWVRTVRNQKTFTFIEINDGSTLSNFQIIATPDIAGYDQLINQLSTGVSVSAIGTIVESPGKEQNLEMQATAITIIGKCDPEVYLLQKKRHTFEFLRSIAHLRPRTNTIGAVTRVRNALAFATHQFFQKRGFLYIHTPIITGSDCEGAGKMFQVTTLDQNNPARTPEGRVDYTQDFFGKPTYLTVSGQLNGEIYACALSDVYTFGPTFRAENSNTSRHLAEFWMIEPEMAFADLNDNMDCAEDYLKYILKYVLDNCQEDMEFFNKHVATDLISRLEHVINTSFERASYTYAVRILEKADKKFEYPVKWGLDLQSEHERFLAEEFFGKPVILTDYPKDIKAFYMRTNEDNKTVAAMDVLVPKVGEIIGGSQREERLSVLESKLKEFNLPAEEYWWYLELRKFGSVPHSGFGAGFERLVQFTTGMENIRDVIPFPRHPGKADF.

This sequence belongs to the class-II aminoacyl-tRNA synthetase family. As to quaternary structure, homodimer.

The protein resides in the cytoplasm. The catalysed reaction is tRNA(Asn) + L-asparagine + ATP = L-asparaginyl-tRNA(Asn) + AMP + diphosphate + H(+). The chain is Asparagine--tRNA ligase from Protochlamydia amoebophila (strain UWE25).